A 628-amino-acid polypeptide reads, in one-letter code: Probable alpha-L-arabinofuranosidase A (628 aa).

Positions M1–G25 are cleaved as a signal peptide. N-linked (GlcNAc...) asparagine glycans are attached at residues N36, N51, N74, N152, N171, N260, N359, and N493.

It belongs to the glycosyl hydrolase 51 family.

The protein localises to the secreted. It carries out the reaction Hydrolysis of terminal non-reducing alpha-L-arabinofuranoside residues in alpha-L-arabinosides.. It functions in the pathway glycan metabolism; L-arabinan degradation. In terms of biological role, alpha-L-arabinofuranosidase involved in the degradation of arabinoxylan, a major component of plant hemicellulose. Acts only on small linear 1,5-alpha-linked L-arabinofuranosyl oligosaccharides. The protein is Probable alpha-L-arabinofuranosidase A (abfA) of Aspergillus awamori (Black koji mold).